A 671-amino-acid polypeptide reads, in one-letter code: DNA ligase (671 aa).

Residues 32-36 (DAEYD), 81-82 (SL), and Glu-113 each bind NAD(+). The active-site N6-AMP-lysine intermediate is Lys-115. Residues Arg-136, Glu-173, Lys-290, and Lys-314 each coordinate NAD(+). Cys-408, Cys-411, Cys-426, and Cys-432 together coordinate Zn(2+). The BRCT domain maps to 593–671 (EIDSPFAGKT…EAEMIRLLGA (79 aa)).

The protein belongs to the NAD-dependent DNA ligase family. LigA subfamily. The cofactor is Mg(2+). Requires Mn(2+) as cofactor.

The enzyme catalyses NAD(+) + (deoxyribonucleotide)n-3'-hydroxyl + 5'-phospho-(deoxyribonucleotide)m = (deoxyribonucleotide)n+m + AMP + beta-nicotinamide D-nucleotide.. Its function is as follows. DNA ligase that catalyzes the formation of phosphodiester linkages between 5'-phosphoryl and 3'-hydroxyl groups in double-stranded DNA using NAD as a coenzyme and as the energy source for the reaction. It is essential for DNA replication and repair of damaged DNA. The chain is DNA ligase from Salmonella dublin (strain CT_02021853).